The primary structure comprises 360 residues: Phospho-N-acetylmuramoyl-pentapeptide-transferase (360 aa).

Transmembrane regions (helical) follow at residues R25–I45, M74–G94, Y97–Y117, Y134–A154, V168–S188, G199–A219, A236–F256, V263–I283, F288–V308, and I339–F359.

The protein belongs to the glycosyltransferase 4 family. MraY subfamily. The cofactor is Mg(2+).

The protein localises to the cell inner membrane. It catalyses the reaction UDP-N-acetyl-alpha-D-muramoyl-L-alanyl-gamma-D-glutamyl-meso-2,6-diaminopimeloyl-D-alanyl-D-alanine + di-trans,octa-cis-undecaprenyl phosphate = di-trans,octa-cis-undecaprenyl diphospho-N-acetyl-alpha-D-muramoyl-L-alanyl-D-glutamyl-meso-2,6-diaminopimeloyl-D-alanyl-D-alanine + UMP. Its pathway is cell wall biogenesis; peptidoglycan biosynthesis. In terms of biological role, catalyzes the initial step of the lipid cycle reactions in the biosynthesis of the cell wall peptidoglycan: transfers peptidoglycan precursor phospho-MurNAc-pentapeptide from UDP-MurNAc-pentapeptide onto the lipid carrier undecaprenyl phosphate, yielding undecaprenyl-pyrophosphoryl-MurNAc-pentapeptide, known as lipid I. In Cellvibrio japonicus (strain Ueda107) (Pseudomonas fluorescens subsp. cellulosa), this protein is Phospho-N-acetylmuramoyl-pentapeptide-transferase.